Consider the following 175-residue polypeptide: Large ribosomal subunit protein uL6 (175 aa).

This sequence belongs to the universal ribosomal protein uL6 family. As to quaternary structure, part of the 50S ribosomal subunit.

In terms of biological role, this protein binds to the 23S rRNA, and is important in its secondary structure. It is located near the subunit interface in the base of the L7/L12 stalk, and near the tRNA binding site of the peptidyltransferase center. This Xanthomonas axonopodis pv. citri (strain 306) protein is Large ribosomal subunit protein uL6.